The primary structure comprises 291 residues: Verruculogen synthase (291 aa).

The protein belongs to the PhyH family. In terms of assembly, homodimer. Fe cation is required as a cofactor.

The enzyme catalyses fumitremorgin B + 2-oxoglutarate + AH2 + 2 O2 = verruculogen + succinate + A + CO2 + H2O. It participates in mycotoxin biosynthesis. Verruculogen synthase; part of the gene cluster that mediates the biosynthesis of fumitremorgins, indole alkaloids that carry not only intriguing chemical structures, but also interesting biological and pharmacological activities. The biosynthesis of fumitremorgin-type alkaloids begins by condensation of the two amino acids L-tryptophan and L-proline to brevianamide F, catalyzed by the non-ribosomal peptide synthetase ftmPS/ftmA. Brevianamide F is then prenylated by the prenyltransferase ftmPT1/ftmB in the presence of dimethylallyl diphosphate, resulting in the formation of tryprostatin B. The three cytochrome P450 monooxygenases, ftmP450-1/ftmC, ftmP450-2/ftmE and ftmP450-3/FtmG, are responsible for the conversion of tryprostatin B to 6-hydroxytryprostatin B, tryprostatin A to fumitremorgin C and fumitremorgin C to 12,13-dihydroxyfumitremorgin C, respectively. The putative methyltransferase ftmMT/ftmD is expected for the conversion of 6-hydroxytryprostatin B to tryprostatin A. FtmPT2/FtmH catalyzes the prenylation of 12,13-dihydroxyfumitre-morgin C in the presence of dimethylallyl diphosphate, resulting in the formation of fumitremorgin B. Fumitremorgin B is further converted to verruculogen by ftmOx1/ftmF via the insertion of an endoperoxide bond between the two prenyl moieties. Finally, verruculogen is further converted to fumitremorgin A by the verruculogen prenyltransferase ftmPT3. The sequence is that of Verruculogen synthase from Neosartorya fischeri (strain ATCC 1020 / DSM 3700 / CBS 544.65 / FGSC A1164 / JCM 1740 / NRRL 181 / WB 181) (Aspergillus fischerianus).